The following is a 273-amino-acid chain: Dermonecrotic toxin (273 aa).

Residues E20 and D22 each contribute to the Mg(2+) site. H35 (nucleophile) is an active-site residue. An intrachain disulfide couples C39 to C45. D79 contacts Mg(2+).

It belongs to the arthropod phospholipase D family. Class I subfamily. Mg(2+) serves as cofactor. As to expression, expressed by the venom gland.

Its subcellular location is the secreted. The catalysed reaction is an N-(acyl)-sphingosylphosphocholine = an N-(acyl)-sphingosyl-1,3-cyclic phosphate + choline. It catalyses the reaction an N-(acyl)-sphingosylphosphoethanolamine = an N-(acyl)-sphingosyl-1,3-cyclic phosphate + ethanolamine. The enzyme catalyses a 1-acyl-sn-glycero-3-phosphocholine = a 1-acyl-sn-glycero-2,3-cyclic phosphate + choline. It carries out the reaction a 1-acyl-sn-glycero-3-phosphoethanolamine = a 1-acyl-sn-glycero-2,3-cyclic phosphate + ethanolamine. Dermonecrotic toxins cleave the phosphodiester linkage between the phosphate and headgroup of certain phospholipids (sphingolipid and lysolipid substrates), forming an alcohol (often choline) and a cyclic phosphate. This toxin acts on sphingomyelin (SM). It may also act on ceramide phosphoethanolamine (CPE), lysophosphatidylcholine (LPC) and lysophosphatidylethanolamine (LPE), but not on lysophosphatidylserine (LPS), and lysophosphatidylglycerol (LPG). It acts by transphosphatidylation, releasing exclusively cyclic phosphate products as second products. Induces dermonecrosis, hemolysis, increased vascular permeability, edema, inflammatory response, and platelet aggregation. The polypeptide is Dermonecrotic toxin (Loxosceles laeta (South American recluse spider)).